Consider the following 276-residue polypeptide: Diaminopimelate epimerase (276 aa).

Substrate-binding residues include Asn-11, Gln-44, and Asn-64. Cys-73 (proton donor) is an active-site residue. Substrate is bound by residues 74 to 75 (GN), Asn-157, Asn-190, and 208 to 209 (ER). Cys-217 functions as the Proton acceptor in the catalytic mechanism. Substrate is bound at residue 218-219 (GS).

It belongs to the diaminopimelate epimerase family. Homodimer.

Its subcellular location is the cytoplasm. It catalyses the reaction (2S,6S)-2,6-diaminopimelate = meso-2,6-diaminopimelate. It participates in amino-acid biosynthesis; L-lysine biosynthesis via DAP pathway; DL-2,6-diaminopimelate from LL-2,6-diaminopimelate: step 1/1. Functionally, catalyzes the stereoinversion of LL-2,6-diaminopimelate (L,L-DAP) to meso-diaminopimelate (meso-DAP), a precursor of L-lysine and an essential component of the bacterial peptidoglycan. In Blochmanniella floridana, this protein is Diaminopimelate epimerase.